The chain runs to 1479 residues: Protein CHROMATIN REMODELING 20 (1479 aa).

Residues 19-49 (EVIVESKEDEMDIIIEENREAEQEVMEVKAR) are a coiled coil. Positions 40–55 (EQEVMEVKARDGRGEQ) are enriched in basic and acidic residues. Residues 40 to 109 (EQEVMEVKAR…DELDLEKPLS (70 aa)) form a disordered region. Over residues 76-86 (DASSRSESSDF) the composition is skewed to low complexity. Residues 94–109 (ILSRRDDELDLEKPLS) show a composition bias toward basic and acidic residues. Positions 109–199 (SEEEIDELIS…EQLDGAGIEL (91 aa)) form a coiled coil. The ADD domain maps to 472–601 (RDDSQNPANN…KKSIELSSDS (130 aa)). A GATA-type; atypical zinc finger spans residues 483–514 (RCTACNKVAVEVHSHPLLEVIVCMDCKRSIED). The PHD-type; atypical zinc finger occupies 524-577 (ERHCEWCGHIADLIDCRTCEKLFCASCIKRNIGEEYMSEAQSSGWDCCCCSPIP). A coiled-coil region spans residues 578-598 (LQRLTLELEKAMRDKKSIELS). The segment at 594 to 615 (SIELSSDSSSDSSSDNNSVDTD) is disordered. The span at 598–615 (SSDSSSDSSSDNNSVDTD) shows a compositional bias: low complexity. Positions 741–924 (VKSGDKGLGC…YCMVDFVREG (184 aa)) constitute a Helicase ATP-binding domain. 754–761 (HTMGLGKT) lines the ATP pocket. The DEAH box motif lies at 875–878 (DEAH). In terms of domain architecture, Helicase C-terminal spans 1122 to 1290 (DILSMSADVG…QVHRTISKEE (169 aa)). Residues 1400–1423 (SESPVVPKPSPSTQTEPLPQPKGF) are disordered.

Belongs to the SNF2/RAD54 helicase family.

Its subcellular location is the nucleus. The protein resides in the chromosome. It is found in the telomere. In terms of biological role, involved in transcriptional regulation and chromatin remodeling. Facilitates DNA replication in multiple cellular environments and is required for efficient replication of a subset of genomic loci. Binds to DNA tandem repeat sequences in both telomeres and euchromatin and in vitro binds DNA quadruplex structures. May help stabilizing G-rich regions into regular chromatin structures by remodeling G4 DNA and incorporating H3.3-containing nucleosomes. Involved in DNA repair of gamma-irradiation-mediated damages. The protein is Protein CHROMATIN REMODELING 20 of Arabidopsis thaliana (Mouse-ear cress).